The chain runs to 241 residues: 7-cyano-7-deazaguanine synthase (241 aa).

9–19 is a binding site for ATP; the sequence is LSGGLDSSTVL. Residues cysteine 189, cysteine 197, cysteine 200, and cysteine 203 each coordinate Zn(2+).

This sequence belongs to the QueC family. Requires Zn(2+) as cofactor.

It carries out the reaction 7-carboxy-7-deazaguanine + NH4(+) + ATP = 7-cyano-7-deazaguanine + ADP + phosphate + H2O + H(+). The protein operates within purine metabolism; 7-cyano-7-deazaguanine biosynthesis. Catalyzes the ATP-dependent conversion of 7-carboxy-7-deazaguanine (CDG) to 7-cyano-7-deazaguanine (preQ(0)). This Thermoplasma volcanium (strain ATCC 51530 / DSM 4299 / JCM 9571 / NBRC 15438 / GSS1) protein is 7-cyano-7-deazaguanine synthase.